Here is a 377-residue protein sequence, read N- to C-terminus: Iris (377 aa).

2 N-linked (GlcNAc...) asparagine glycosylation sites follow: Asn11 and Asn226.

Belongs to the serpin family. Female saliva (at protein level). Female salivary gland (at protein level).

It is found in the secreted. Its function is as follows. Serine protease inhibitor with anticoagulant and immunosuppressive properties that can modulate blood feeding of ticks on vertebrate species. Strongly inhibits human leukocyte elastase (ELANE) and porcine pancreatic elastase. Moderately inhibits human tPA/tissue-type plasminogen activator (PLAT), coagulation factor Xa (F10), thrombin (F2) and trypsin. Does not inhibit human plasmin (PLG). Inhibits platelet aggregation. Inhibits the intrinsic pathway of blood coagulation in the host. Inhibits fibrinolysis in the host. Inhibits proliferation of mouse splenocytes. Decreases the number of IFN-gamma (IFNG)-producing human peripheral blood mononuclear cells (PBMCs) after stimulation with phytohemagglutinin A (PHA). Increases the number of IL10-producing human PBMCs after stimulation with lipopolysaccharides (LPS) with no significant effect on IL10 production. Inhibits production of IFNG, IL6, TNF-alpha (TNF) and CXCL8 by human PBMCs. Binds to monocyte/macrophage subpopulation of the host PBMCs. Increases both survival rate and survival time in mice with LPS-induced endotoxemic shock. This Ixodes ricinus (Common tick) protein is Iris.